A 226-amino-acid chain; its full sequence is Isoprenyl transferase (226 aa).

Residue Asp12 is part of the active site. Asp12 is a binding site for Mg(2+). Residues 13 to 16 (GNAR), Trp17, Lys25, His29, and 57 to 59 (SSE) contribute to the substrate site. The active-site Proton acceptor is the Asn60. Substrate is bound by residues Trp61, Arg63, Arg174, and 180–182 (RIS). Glu193 is a binding site for Mg(2+).

It belongs to the UPP synthase family. As to quaternary structure, homodimer. Mg(2+) is required as a cofactor.

Functionally, catalyzes the condensation of isopentenyl diphosphate (IPP) with allylic pyrophosphates generating different type of terpenoids. This is Isoprenyl transferase from Rickettsia bellii (strain RML369-C).